We begin with the raw amino-acid sequence, 207 residues long: Na(+)-translocating ferredoxin:NAD(+) oxidoreductase complex subunit G (207 aa).

A helical membrane pass occupies residues 18-38 (GLILFVISAVAACALALTNYV). An FMN phosphoryl threonine modification is found at Thr-185.

It belongs to the RnfG family. As to quaternary structure, the complex is composed of six subunits: RnfA, RnfB, RnfC, RnfD, RnfE and RnfG. The cofactor is FMN.

Its subcellular location is the cell membrane. The enzyme catalyses 2 reduced [2Fe-2S]-[ferredoxin] + Na(+)(in) + NAD(+) + H(+) = 2 oxidized [2Fe-2S]-[ferredoxin] + Na(+)(out) + NADH. Its function is as follows. Part of a membrane-bound complex that couples electron transfer with translocation of ions across the membrane. Couples electron transfer from reduced ferredoxin to NAD(+) with electrogenic movement of Na(+) out of the cell. Involved in caffeate respiration. This chain is Na(+)-translocating ferredoxin:NAD(+) oxidoreductase complex subunit G, found in Acetobacterium woodii (strain ATCC 29683 / DSM 1030 / JCM 2381 / KCTC 1655 / WB1).